The sequence spans 361 residues: dTDP-glucose 4,6-dehydratase (361 aa).

Residues 11–12, 32–35, 58–59, 80–84, and Thr99 contribute to the NAD(+) site; these read FI, DKLT, DI, and LAAES. Residue Ser84 coordinates substrate. Residue Thr133 coordinates substrate. Asp134 functions as the Proton donor in the catalytic mechanism. Residues Glu135 and Tyr167 each act as proton acceptor in the active site. Position 167–171 (167–171) interacts with NAD(+); it reads YSASK. Asn196 lines the substrate pocket. NAD(+) is bound at residue Asn197. Substrate-binding positions include 206-207, 222-224, Arg231, Asn266, 296-300, and Tyr357; these read KL, PIY, and DRPGH.

Belongs to the NAD(P)-dependent epimerase/dehydratase family. dTDP-glucose dehydratase subfamily. In terms of assembly, homodimer. The cofactor is NAD(+).

It catalyses the reaction dTDP-alpha-D-glucose = dTDP-4-dehydro-6-deoxy-alpha-D-glucose + H2O. It participates in carbohydrate biosynthesis; dTDP-L-rhamnose biosynthesis. Its pathway is bacterial outer membrane biogenesis; LPS O-antigen biosynthesis. Catalyzes the dehydration of dTDP-D-glucose to form dTDP-6-deoxy-D-xylo-4-hexulose via a three-step process involving oxidation, dehydration and reduction. The sequence is that of dTDP-glucose 4,6-dehydratase from Salmonella typhimurium (strain LT2 / SGSC1412 / ATCC 700720).